Reading from the N-terminus, the 207-residue chain is MADS-box protein AGL71 (207 aa).

Residues Met1–Gln61 form the MADS-box domain. In terms of domain architecture, K-box spans Leu88 to Ser178.

It is found in the nucleus. MADS-box transcription factor that acts with AGL42 and AGL72 in the control of flowering time. Promotes flowering at the shoot apical and axillary meristems. Seems to act through a gibberellin-dependent pathway. Interacts genetically with SOC1 and its expression is directly regulated by SOC1. This Arabidopsis thaliana (Mouse-ear cress) protein is MADS-box protein AGL71 (AGL71).